We begin with the raw amino-acid sequence, 486 residues long: Protein nucleotidyltransferase YdiU (486 aa).

ATP-binding residues include Gly-90, Gly-92, Arg-93, Lys-113, Asp-125, Gly-126, Arg-176, and Arg-183. Asp-252 acts as the Proton acceptor in catalysis. Mg(2+) is bound by residues Asn-253 and Asp-262. Asp-262 is an ATP binding site.

It belongs to the SELO family. Mg(2+) is required as a cofactor. It depends on Mn(2+) as a cofactor.

The catalysed reaction is L-seryl-[protein] + ATP = 3-O-(5'-adenylyl)-L-seryl-[protein] + diphosphate. The enzyme catalyses L-threonyl-[protein] + ATP = 3-O-(5'-adenylyl)-L-threonyl-[protein] + diphosphate. It carries out the reaction L-tyrosyl-[protein] + ATP = O-(5'-adenylyl)-L-tyrosyl-[protein] + diphosphate. It catalyses the reaction L-histidyl-[protein] + UTP = N(tele)-(5'-uridylyl)-L-histidyl-[protein] + diphosphate. The catalysed reaction is L-seryl-[protein] + UTP = O-(5'-uridylyl)-L-seryl-[protein] + diphosphate. The enzyme catalyses L-tyrosyl-[protein] + UTP = O-(5'-uridylyl)-L-tyrosyl-[protein] + diphosphate. In terms of biological role, nucleotidyltransferase involved in the post-translational modification of proteins. It can catalyze the addition of adenosine monophosphate (AMP) or uridine monophosphate (UMP) to a protein, resulting in modifications known as AMPylation and UMPylation. This is Protein nucleotidyltransferase YdiU from Pseudomonas paraeruginosa (strain DSM 24068 / PA7) (Pseudomonas aeruginosa (strain PA7)).